Consider the following 137-residue polypeptide: MSSLTTDLMLTHRHLNDRGQVAATIDEILNTHKLFSTRHRIIDTSENVDNVIVIADQLFDDRGATIGTYDFYIDVSALPEQVHEGIVIARLAKSTQNRAGIEQTKSMLMLIDGITYDTPFNLLKYAVPGNQHQAAAG.

This is an uncharacterized protein from Mycobacterium leprae (strain TN).